A 295-amino-acid polypeptide reads, in one-letter code: Small ribosomal subunit protein uS2 (295 aa).

Belongs to the universal ribosomal protein uS2 family.

The polypeptide is Small ribosomal subunit protein uS2 (Rickettsia typhi (strain ATCC VR-144 / Wilmington)).